We begin with the raw amino-acid sequence, 254 residues long: Low affinity immunoglobulin gamma Fc region receptor III-A (254 aa).

A signal peptide spans 1 to 16; it reads MWQLLLPTALLLLVSA. The Extracellular segment spans residues 17 to 208; sequence GMRAEDLPKA…ISSFFPPGYQ (192 aa). 2 consecutive Ig-like C2-type domains span residues 24–105 and 107–189; these read PKAV…LEVH and GWLL…VNIT. 2 cysteine pairs are disulfide-bonded: Cys47–Cys89 and Cys128–Cys172. Residues Asn56, Asn63, and Asn82 are each glycosylated (N-linked (GlcNAc...) asparagine). Asn180 and Asn187 each carry an N-linked (GlcNAc...) asparagine glycan. The helical transmembrane segment at 209-229 threads the bilayer; it reads VSFCLVMVLLFAVDTGLYFSM. Topologically, residues 230–254 are cytoplasmic; it reads KKSIPSSTRDWEDHKFKWSKDPQDK.

Forms a heterooligomeric complex with ITAM-containing signaling subunits, either a homodimer of CD247, a homodimer of FCER1G or a heterodimer of CD247 and FCER1G. Interacts (via transmembrane domain) with signaling subunits; this interaction is a prerequisite for receptor complex expression on the cell surface and intracellular signal transduction. Binds the Fc region of antigen-complexed IgG with a preference for IgG1 and IgG3 isotypes. Interacts with CD2; this interaction is involved in NK cell activation and cytotoxicity. Interacts with S100A4; this interaction inhibits PKC-dependent phosphorylation of FCGR3A. Glycosylated. Glycosylation plays an inhibitory role in the interaction with IgG1 and IgG2. In terms of processing, undergoes rapid ectodomain shedding upon NK cell stimulation. The soluble form is produced by a proteolytic cleavage mediated by ADAM17. Repeated stimulation causes receptor shedding, a mechanism that allows for increased NK cell motility and detachment from opsonized target cells while avoiding activation-induced NK cell apoptosis. Lymphocytes and monocytes.

It is found in the cell membrane. It localises to the secreted. Receptor for the invariable Fc fragment of immunoglobulin gamma (IgG). Optimally activated upon binding of clustered antigen-IgG complexes displayed on cell surfaces, triggers lysis of antibody-coated cells, a process known as antibody-dependent cellular cytotoxicity (ADCC). Does not bind free monomeric IgG, thus avoiding inappropriate effector cell activation in the absence of antigenic trigger. Mediates IgG effector functions on natural killer (NK) cells. Binds antigen-IgG complexes generated upon infection and triggers NK cell-dependent cytokine production and degranulation to limit viral load and propagation. Involved in the generation of memory-like adaptive NK cells capable to produce high amounts of IFNG and to efficiently eliminate virus-infected cells via ADCC. Regulates NK cell survival and proliferation, in particular by preventing NK cell progenitor apoptosis. Fc-binding subunit that associates with CD247 and/or FCER1G adapters to form functional signaling complexes. Following the engagement of antigen-IgG complexes, triggers phosphorylation of immunoreceptor tyrosine-based activation motif (ITAM)-containing adapters with subsequent activation of phosphatidylinositol 3-kinase signaling and sustained elevation of intracellular calcium that ultimately drive NK cell activation. The ITAM-dependent signaling coupled to receptor phosphorylation by PKC mediates robust intracellular calcium flux that leads to production of pro-inflammatory cytokines, whereas in the absence of receptor phosphorylation it mainly activates phosphatidylinositol 3-kinase signaling leading to cell degranulation. Costimulates NK cells and trigger lysis of target cells independently of IgG binding. Mediates the antitumor activities of therapeutic antibodies. Upon ligation on monocytes triggers TNFA-dependent ADCC of IgG-coated tumor cells. Mediates enhanced ADCC in response to afucosylated IgGs. This is Low affinity immunoglobulin gamma Fc region receptor III-A (FCGR3A) from Macaca fascicularis (Crab-eating macaque).